The primary structure comprises 133 residues: Small ribosomal subunit protein uS8 (133 aa).

Belongs to the universal ribosomal protein uS8 family. Part of the 30S ribosomal subunit. Contacts proteins S5 and S12.

Functionally, one of the primary rRNA binding proteins, it binds directly to 16S rRNA central domain where it helps coordinate assembly of the platform of the 30S subunit. The sequence is that of Small ribosomal subunit protein uS8 from Amoebophilus asiaticus (strain 5a2).